Here is a 426-residue protein sequence, read N- to C-terminus: Glutamate-1-semialdehyde 2,1-aminomutase (426 aa).

The residue at position 265 (lysine 265) is an N6-(pyridoxal phosphate)lysine.

This sequence belongs to the class-III pyridoxal-phosphate-dependent aminotransferase family. HemL subfamily. As to quaternary structure, homodimer. It depends on pyridoxal 5'-phosphate as a cofactor.

The protein localises to the cytoplasm. It carries out the reaction (S)-4-amino-5-oxopentanoate = 5-aminolevulinate. It functions in the pathway porphyrin-containing compound metabolism; protoporphyrin-IX biosynthesis; 5-aminolevulinate from L-glutamyl-tRNA(Glu): step 2/2. The protein is Glutamate-1-semialdehyde 2,1-aminomutase of Enterobacter sp. (strain 638).